We begin with the raw amino-acid sequence, 120 residues long: Large ribosomal subunit protein bL12 (120 aa).

It belongs to the bacterial ribosomal protein bL12 family. In terms of assembly, homodimer. Part of the ribosomal stalk of the 50S ribosomal subunit. Forms a multimeric L10(L12)X complex, where L10 forms an elongated spine to which 2 to 4 L12 dimers bind in a sequential fashion. Binds GTP-bound translation factors.

Its function is as follows. Forms part of the ribosomal stalk which helps the ribosome interact with GTP-bound translation factors. Is thus essential for accurate translation. The polypeptide is Large ribosomal subunit protein bL12 (Listeria monocytogenes serovar 1/2a (strain ATCC BAA-679 / EGD-e)).